A 208-amino-acid polypeptide reads, in one-letter code: Fucoxanthin-chlorophyll a-c binding protein, chloroplastic (208 aa).

The N-terminal 31 residues, 1–31 (MMTLASLPSTAIAGLASAAPKVQPRMAANDE), are a transit peptide targeting the chloroplast. The helical transmembrane segment at 102–118 (IPQLPYWLWIVMTIGIG) threads the bilayer.

This sequence belongs to the fucoxanthin chlorophyll protein family. As to quaternary structure, the LHC complex of chromophytic algae is composed of fucoxanthin, chlorophyll A and C bound non-covalently by fucoxanthin chlorophyll proteins (FCPs). The ratio of pigments in this LHC is; fucoxanthin: chlorophyll C: chlorophyll A; (0.6-1): (0.1-0.3): (1).

The protein resides in the plastid. It localises to the chloroplast thylakoid membrane. The light-harvesting complex (LHC) functions as a light receptor, it captures and delivers excitation energy to photosystems with which it is closely associated. Energy is transferred from the carotenoid and chlorophyll C (or B) to chlorophyll A and the photosynthetic reaction centers where it is used to synthesize ATP and reducing power. The protein is Fucoxanthin-chlorophyll a-c binding protein, chloroplastic (FCP) of Isochrysis galbana (Marine planktonic alga).